A 767-amino-acid polypeptide reads, in one-letter code: Photosystem I P700 chlorophyll a apoprotein A1 (767 aa).

A disordered region spans residues 1-22; sequence MTISPPESGEKNKKVLEDPVKA. The span at 8 to 22 shows a compositional bias: basic and acidic residues; sequence SGEKNKKVLEDPVKA. The next 8 membrane-spanning stretches (helical) occupy residues 76–99, 162–185, 201–225, 309–327, 368–391, 407–433, 455–477, and 558–576; these read IFSAHFGHLAVIFIWMSAAFFHGA, LMALAIGAVVMAALMLHAGIFHYH, LNHHIAGLVGLGSLAWAGHCIHIGA, VSHHHLAFGVIAIIGGHMY, RHAQLSVNLAMLGSISILVSHHMY, LGLFTHHMWIGGLFIVGAGAHAGIAMV, ALISHLNWVCMWLGFHSFGLYIH, and LMIHHIHAFQIHVTVLILL. Residues Cys600 and Cys609 each coordinate [4Fe-4S] cluster. 2 helical membrane passes run 616-637 and 681-703; these read HVFLALFWMYNCLSIVIFHFSW and ISMYGLMFLGAHFIWAFSLMFLF. His692 is a divinylchlorophyll a' binding site. Divinyl chlorophyll a contacts are provided by Met700 and Tyr708. Phylloquinone is bound at residue Trp709. Residues 741–761 traverse the membrane as a helical segment; it reads AVGVTHFLVGGIATTWAFFHA.

It belongs to the PsaA/PsaB family. As to quaternary structure, the PsaA/B heterodimer binds the P700 divinyl chlorophyll special pair and subsequent electron acceptors. PSI consists of a core antenna complex that captures photons, and an electron transfer chain that converts photonic excitation into a charge separation. The cyanobacterial PSI reaction center is composed of one copy each of PsaA,B,C,D,E,F,I,J,K,L,M and X, and forms trimeric complexes. PSI electron transfer chain: 5 divinyl chlorophyll a, 1 divinyl chlorophyll a', 2 phylloquinones and 3 4Fe-4S clusters. PSI core antenna: 90 divinyl chlorophyll a, 22 carotenoids, 3 phospholipids and 1 galactolipid. P700 is a divinyl chlorophyll a/divinyl chlorophyll a' dimer, A0 is one or more divinyl chlorophyll a, A1 is one or both phylloquinones and FX is a shared 4Fe-4S iron-sulfur center. serves as cofactor.

It is found in the cellular thylakoid membrane. The enzyme catalyses reduced [plastocyanin] + hnu + oxidized [2Fe-2S]-[ferredoxin] = oxidized [plastocyanin] + reduced [2Fe-2S]-[ferredoxin]. PsaA and PsaB bind P700, the primary electron donor of photosystem I (PSI), as well as the electron acceptors A0, A1 and FX. PSI is a plastocyanin/cytochrome c6-ferredoxin oxidoreductase, converting photonic excitation into a charge separation, which transfers an electron from the donor P700 chlorophyll pair to the spectroscopically characterized acceptors A0, A1, FX, FA and FB in turn. Oxidized P700 is reduced on the lumenal side of the thylakoid membrane by plastocyanin or cytochrome c6. The polypeptide is Photosystem I P700 chlorophyll a apoprotein A1 (Prochlorococcus marinus (strain AS9601)).